A 154-amino-acid polypeptide reads, in one-letter code: MKLRDSLAENNSIRLQAEANTWQEAVKIGVDLLVAADVVEPRYYQAILDGVEQFGPYFVIAPGLAMPHGRPEEGVKKTGFSLVTLKKPLEFNHEDNDPVDILITMAAVDANTHQEVGIMQIVNLFEDEANFDRLRACRTAQEVLDLIDRTNAAA.

The region spanning 6–150 (SLAENNSIRL…QEVLDLIDRT (145 aa)) is the PTS EIIA type-2 domain. His68 acts as the Tele-phosphohistidine intermediate in catalysis. The residue at position 68 (His68) is a Phosphohistidine.

The protein localises to the cytoplasm. In terms of biological role, the phosphoenolpyruvate-dependent sugar phosphotransferase system (sugar PTS), a major carbohydrate active transport system, catalyzes the phosphorylation of incoming sugar substrates concomitantly with their translocation across the cell membrane. The enzyme II UlaABC PTS system is involved in ascorbate transport. This is Ascorbate-specific PTS system EIIA component (ulaC) from Salmonella choleraesuis (strain SC-B67).